Here is a 303-residue protein sequence, read N- to C-terminus: Crk-like protein (303 aa).

Positions 14–102 constitute an SH2 domain; sequence WYMGPVTRQE…LDTTTLIEPA (89 aa). The region spanning 123-183 is the SH3 1 domain; it reads ENLEYVRTLY…PVPYVEKLVR (61 aa). Position 127 is a phosphotyrosine (Tyr-127). Residues 184-203 form a disordered region; that stretch reads SSPHGKHGNRNSNSYGIPEP. Residue Tyr-207 is modified to Phosphotyrosine. The SH3 2 domain maps to 235-296; it reads NGPVFAKAIQ…PFTHVKIFDP (62 aa).

The protein belongs to the CRK family. As to quaternary structure, interacts with DOCK2 and EPOR. Interacts with phosphorylated CBLB and IRS4. Interacts with INPP5D/SHIP1. Interacts with BCAR1/CAS and NEDD9/HEF1. Phosphorylated on tyrosine. Phosphorylation is prominent during early development, but decreases at later embryonic stages and in newborn mice.

Functionally, may mediate the transduction of intracellular signals. The polypeptide is Crk-like protein (Crkl) (Mus musculus (Mouse)).